A 635-amino-acid chain; its full sequence is Ligand-gated ion channel 4 (635 aa).

Residues methionine 1 to alanine 24 form the signal peptide. The Extracellular segment spans residues glycine 25 to tyrosine 324. Residues asparagine 46, asparagine 139, asparagine 177, and asparagine 225 are each glycosylated (N-linked (GlcNAc...) asparagine). A disulfide bridge connects residues cysteine 238 and cysteine 252. N-linked (GlcNAc...) asparagine glycosylation is present at asparagine 282. A run of 3 helical transmembrane segments spans residues valine 325–methionine 345, methionine 355–proline 375, and valine 381–valine 401. At asparagine 402 to leucine 599 the chain is on the cytoplasmic side. The helical transmembrane segment at leucine 600–valine 620 threads the bilayer. N-linked (GlcNAc...) asparagine glycosylation is present at asparagine 625.

Belongs to the ligand-gated ion channel (TC 1.A.9) family.

It localises to the postsynaptic cell membrane. The protein resides in the cell membrane. In terms of biological role, possible acetylcholine receptor. In Caenorhabditis elegans, this protein is Ligand-gated ion channel 4 (lgc-4).